The following is a 45-amino-acid chain: Large ribosomal subunit protein bL34 (45 aa).

The disordered stretch occupies residues 1 to 45 (MTKRTFQPNNRRRARKHGFRARMRTRAGRAILSARRGKNRAELSA). Basic residues predominate over residues 10–27 (NRRRARKHGFRARMRTRA).

The protein belongs to the bacterial ribosomal protein bL34 family.

In Micrococcus luteus (strain ATCC 4698 / DSM 20030 / JCM 1464 / CCM 169 / CCUG 5858 / IAM 1056 / NBRC 3333 / NCIMB 9278 / NCTC 2665 / VKM Ac-2230) (Micrococcus lysodeikticus), this protein is Large ribosomal subunit protein bL34.